Here is a 60-residue protein sequence, read N- to C-terminus: Stress response protein YkoL (60 aa).

This is Stress response protein YkoL (ykoL) from Bacillus subtilis (strain 168).